We begin with the raw amino-acid sequence, 695 residues long: ATP-dependent DNA helicase II subunit 2 (695 aa).

The Ku domain maps to 229 to 461 (FSIGNRDSKD…IDFAVSNYID (233 aa)).

It belongs to the ku80 family. Heterodimer of pku70 and pku80.

Its subcellular location is the nucleus. The protein localises to the chromosome. The protein resides in the telomere. The enzyme catalyses ATP + H2O = ADP + phosphate + H(+). Functionally, single-stranded DNA-dependent ATP-dependent helicase. Involved in non-homologous end joining (NHEJ) DNA double strand break repair. DNA-binding is sequence-independent but has a high affinity to nicks in double-stranded DNA and to the ends of duplex DNA. Binds to naturally occurring chromosomal ends, and therefore provides chromosomal end protection. Required also for telomere recombination to repair telomeric ends in the absence of telomerase. ku70, of the ku70/ku80 heterodimer, binds to the stem loop of tlc1, the RNA component of telomerase. Involved in telomere maintenance. Interacts with telomeric repeats and subtelomeric sequences thereby controlling telomere length and protecting against subtelomeric rearrangement. Required for mating-type switching. In Schizosaccharomyces pombe (strain 972 / ATCC 24843) (Fission yeast), this protein is ATP-dependent DNA helicase II subunit 2 (pku80).